Consider the following 899-residue polypeptide: Semaphorin-1A (899 aa).

Low complexity predominate over residues 1–20 (MLNSHNTNHNNNSASNSNYN). A disordered region spans residues 1–24 (MLNSHNTNHNNNSASNSNYNKGHK). Topologically, residues 1-40 (MLNSHNTNHNNNSASNSNYNKGHKMHLKSATAKATIMKHK) are cytoplasmic. A helical membrane pass occupies residues 41–61 (LSKFYGYGWMQVFLLLTVLVI). Topologically, residues 62–657 (GNQSAWQENI…INAQYTVETL (596 aa)) are extracellular. Asn63, Asn90, and Asn117 each carry an N-linked (GlcNAc...) asparagine glycan. A Sema domain is found at 74–543 (KLYVELGPED…TDSQVVAIQL (470 aa)). 2 disulfide bridges follow: Cys141-Cys151 and Cys169-Cys178. N-linked (GlcNAc...) asparagine glycans are attached at residues Asn187, Asn207, and Asn311. 2 cysteine pairs are disulfide-bonded: Cys288–Cys402 and Cys312–Cys361. The N-linked (GlcNAc...) asparagine glycan is linked to Asn404. The chain crosses the membrane as a helical span at residues 658 to 678 (VMAVLAGSIFSLLVGFFTGYF). The Cytoplasmic portion of the chain corresponds to 679 to 899 (CGRRCHKDED…PKNCSYIYRD (221 aa)). 2 disordered regions span residues 735 to 766 (VLLP…QGPN) and 798 to 899 (VMGD…IYRD). A compositionally biased stretch (polar residues) spans 809–827 (FSTTRSVKKAVNNTNTRNR). Residues 828–837 (SLGRARRQPP) are compositionally biased toward basic residues. Residues 847-876 (SNSPQQQQQQSQQPHSSSGSSPVMSNSSSS) are compositionally biased toward low complexity.

The protein belongs to the semaphorin family. Expressed by subsets of neurons and muscles.

Its subcellular location is the cell membrane. Involved in growth cone guidance through its role in axonal repulsion. Function in neurons is essential for adult survival, motor neuron survival, and is important for climbing behavior and activity. The sequence is that of Semaphorin-1A from Drosophila melanogaster (Fruit fly).